We begin with the raw amino-acid sequence, 395 residues long: Acetate kinase (395 aa).

Residue Asn7 participates in Mg(2+) binding. Lys14 lines the ATP pocket. Arg92 is a binding site for substrate. Catalysis depends on Asp149, which acts as the Proton donor/acceptor. Residues 207-211 (HLGNG), 282-284 (DMR), and 329-333 (GIGEN) contribute to the ATP site. Glu382 provides a ligand contact to Mg(2+).

Belongs to the acetokinase family. As to quaternary structure, homodimer. Requires Mg(2+) as cofactor. Mn(2+) serves as cofactor.

The protein resides in the cytoplasm. The enzyme catalyses acetate + ATP = acetyl phosphate + ADP. It functions in the pathway metabolic intermediate biosynthesis; acetyl-CoA biosynthesis; acetyl-CoA from acetate: step 1/2. Functionally, catalyzes the formation of acetyl phosphate from acetate and ATP. Can also catalyze the reverse reaction. This chain is Acetate kinase, found in Brachyspira hyodysenteriae (strain ATCC 49526 / WA1).